The sequence spans 174 residues: 2-oxo-4-hydroxy-4-carboxy-5-ureidoimidazoline decarboxylase (174 aa).

Catalysis depends on H67, which acts as the Proton donor. Residues P68, 84–88 (SQEEQ), and 119–123 (FVICA) each bind substrate. The Microbody targeting signal signature appears at 172–174 (TKL).

Belongs to the OHCU decarboxylase family. As to quaternary structure, homodimer.

The protein resides in the peroxisome. The catalysed reaction is 5-hydroxy-2-oxo-4-ureido-2,5-dihydro-1H-imidazole-5-carboxylate + H(+) = (S)-allantoin + CO2. The protein operates within purine metabolism; urate degradation; (S)-allantoin from urate: step 3/3. In terms of biological role, catalyzes the stereoselective decarboxylation of 2-oxo-4-hydroxy-4-carboxy-5-ureidoimidazoline (OHCU) to (S)-allantoin. This is 2-oxo-4-hydroxy-4-carboxy-5-ureidoimidazoline decarboxylase (urad) from Danio rerio (Zebrafish).